We begin with the raw amino-acid sequence, 189 residues long: Translation initiation factor IF-3 (189 aa).

This sequence belongs to the IF-3 family. As to quaternary structure, monomer.

Its subcellular location is the cytoplasm. Its function is as follows. IF-3 binds to the 30S ribosomal subunit and shifts the equilibrium between 70S ribosomes and their 50S and 30S subunits in favor of the free subunits, thus enhancing the availability of 30S subunits on which protein synthesis initiation begins. In Corynebacterium glutamicum (strain ATCC 13032 / DSM 20300 / JCM 1318 / BCRC 11384 / CCUG 27702 / LMG 3730 / NBRC 12168 / NCIMB 10025 / NRRL B-2784 / 534), this protein is Translation initiation factor IF-3.